The chain runs to 122 residues: Phospholipase A2 homolog ECS_00014 (122 aa).

Intrachain disulfides connect Cys26–Cys115, Cys28–Cys44, Cys43–Cys95, Cys49–Cys122, Cys50–Cys88, Cys57–Cys81, and Cys75–Cys86. Residues 105–117 (KKYTYYPNFWCKG) form an important for membrane-damaging activities in eukaryotes and bacteria; heparin-binding region.

Belongs to the phospholipase A2 family. Group II subfamily. S49 sub-subfamily. As to quaternary structure, monomer. As to expression, expressed by the venom gland.

It is found in the secreted. In terms of biological role, snake venom phospholipase A2 homolog that lacks enzymatic activity. Shows high myotoxin activities and displays edema-inducing activities. Has cytotoxic activities against HUVEC cells (LC(50)=12.2 uL) and human lung adenocarcinoma A549 cells (LC(50)=8.5 uL). This is Phospholipase A2 homolog ECS_00014 from Echis carinatus sochureki (Saw-scaled viper).